Consider the following 304-residue polypeptide: Acetyl-coenzyme A carboxylase carboxyl transferase subunit beta (304 aa).

Positions 23 to 292 (VWTKCDSCGQ…PNPDAPREGV (270 aa)) constitute a CoA carboxyltransferase N-terminal domain. Zn(2+) contacts are provided by cysteine 27, cysteine 30, cysteine 46, and cysteine 49. Residues 27-49 (CDSCGQVLYRAELERNLEVCPKC) form a C4-type zinc finger. A disordered region spans residues 284 to 304 (NPDAPREGVVVPPAPGQESEA).

This sequence belongs to the AccD/PCCB family. Acetyl-CoA carboxylase is a heterohexamer composed of biotin carboxyl carrier protein (AccB), biotin carboxylase (AccC) and two subunits each of ACCase subunit alpha (AccA) and ACCase subunit beta (AccD). It depends on Zn(2+) as a cofactor.

The protein resides in the cytoplasm. It carries out the reaction N(6)-carboxybiotinyl-L-lysyl-[protein] + acetyl-CoA = N(6)-biotinyl-L-lysyl-[protein] + malonyl-CoA. The protein operates within lipid metabolism; malonyl-CoA biosynthesis; malonyl-CoA from acetyl-CoA: step 1/1. Functionally, component of the acetyl coenzyme A carboxylase (ACC) complex. Biotin carboxylase (BC) catalyzes the carboxylation of biotin on its carrier protein (BCCP) and then the CO(2) group is transferred by the transcarboxylase to acetyl-CoA to form malonyl-CoA. This is Acetyl-coenzyme A carboxylase carboxyl transferase subunit beta from Salmonella arizonae (strain ATCC BAA-731 / CDC346-86 / RSK2980).